The following is a 271-amino-acid chain: Formamidopyrimidine-DNA glycosylase (271 aa).

The active-site Schiff-base intermediate with DNA is the Pro-2. Glu-3 serves as the catalytic Proton donor. Lys-57 functions as the Proton donor; for beta-elimination activity in the catalytic mechanism. DNA contacts are provided by His-90, Arg-109, and Lys-150. An FPG-type zinc finger spans residues 235 to 269 (LVYGNKDKPCPKCGGKIESLIIGQRNSFFCPKCQK). The active-site Proton donor; for delta-elimination activity is the Arg-259.

It belongs to the FPG family. Monomer. It depends on Zn(2+) as a cofactor.

The enzyme catalyses Hydrolysis of DNA containing ring-opened 7-methylguanine residues, releasing 2,6-diamino-4-hydroxy-5-(N-methyl)formamidopyrimidine.. It catalyses the reaction 2'-deoxyribonucleotide-(2'-deoxyribose 5'-phosphate)-2'-deoxyribonucleotide-DNA = a 3'-end 2'-deoxyribonucleotide-(2,3-dehydro-2,3-deoxyribose 5'-phosphate)-DNA + a 5'-end 5'-phospho-2'-deoxyribonucleoside-DNA + H(+). Functionally, involved in base excision repair of DNA damaged by oxidation or by mutagenic agents. Acts as a DNA glycosylase that recognizes and removes damaged bases. Has a preference for oxidized purines, such as 7,8-dihydro-8-oxoguanine (8-oxoG). Has AP (apurinic/apyrimidinic) lyase activity and introduces nicks in the DNA strand. Cleaves the DNA backbone by beta-delta elimination to generate a single-strand break at the site of the removed base with both 3'- and 5'-phosphates. The protein is Formamidopyrimidine-DNA glycosylase of Haemophilus influenzae (strain PittEE).